A 704-amino-acid polypeptide reads, in one-letter code: Elongation factor G (704 aa).

The tr-type G domain occupies 8–290; it reads ARYRNIGISA…AVIDYLPSPV (283 aa). Residues 17 to 24, 88 to 92, and 142 to 145 each bind GTP; these read AHIDAGKT, DTPGH, and NKMD. N6-acetyllysine is present on residues lysine 504 and lysine 643.

The protein belongs to the TRAFAC class translation factor GTPase superfamily. Classic translation factor GTPase family. EF-G/EF-2 subfamily.

Its subcellular location is the cytoplasm. Catalyzes the GTP-dependent ribosomal translocation step during translation elongation. During this step, the ribosome changes from the pre-translocational (PRE) to the post-translocational (POST) state as the newly formed A-site-bound peptidyl-tRNA and P-site-bound deacylated tRNA move to the P and E sites, respectively. Catalyzes the coordinated movement of the two tRNA molecules, the mRNA and conformational changes in the ribosome. This Escherichia coli O17:K52:H18 (strain UMN026 / ExPEC) protein is Elongation factor G.